The sequence spans 437 residues: Serine hydroxymethyltransferase (437 aa).

(6S)-5,6,7,8-tetrahydrofolate is bound by residues Leu130 and 134-136 (GHL). At Lys239 the chain carries N6-(pyridoxal phosphate)lysine.

This sequence belongs to the SHMT family. In terms of assembly, homodimer. Pyridoxal 5'-phosphate is required as a cofactor.

It localises to the cytoplasm. It catalyses the reaction (6R)-5,10-methylene-5,6,7,8-tetrahydrofolate + glycine + H2O = (6S)-5,6,7,8-tetrahydrofolate + L-serine. It participates in one-carbon metabolism; tetrahydrofolate interconversion. It functions in the pathway amino-acid biosynthesis; glycine biosynthesis; glycine from L-serine: step 1/1. In terms of biological role, catalyzes the reversible interconversion of serine and glycine with tetrahydrofolate (THF) serving as the one-carbon carrier. This reaction serves as the major source of one-carbon groups required for the biosynthesis of purines, thymidylate, methionine, and other important biomolecules. Also exhibits THF-independent aldolase activity toward beta-hydroxyamino acids, producing glycine and aldehydes, via a retro-aldol mechanism. The chain is Serine hydroxymethyltransferase from Bartonella tribocorum (strain CIP 105476 / IBS 506).